The chain runs to 255 residues: DNA repair protein RecO (255 aa).

Belongs to the RecO family.

Functionally, involved in DNA repair and RecF pathway recombination. This is DNA repair protein RecO from Listeria monocytogenes serotype 4a (strain HCC23).